The chain runs to 795 residues: Delta-1-pyrroline-5-carboxylate synthase (795 aa).

Residues 1–361 (MLSQVYRCGF…FFSEVKPAGP (361 aa)) form a glutamate 5-kinase region. Substrate contacts are provided by serine 117, aspartate 223, and asparagine 246. ATP is bound by residues 266–267 (SD) and 305–311 (MGGMEAK). N6-succinyllysine occurs at positions 311, 347, and 550. The segment at 362 to 795 (TVEQQGEMAR…NLPIPQRNTN (434 aa)) is gamma-glutamyl phosphate reductase.

This sequence in the N-terminal section; belongs to the glutamate 5-kinase family. The protein in the C-terminal section; belongs to the gamma-glutamyl phosphate reductase family. As to quaternary structure, can form homodimers/multimers.

It localises to the mitochondrion. The protein localises to the mitochondrion matrix. The catalysed reaction is L-glutamate + ATP = L-glutamyl 5-phosphate + ADP. The enzyme catalyses L-glutamate 5-semialdehyde + phosphate + NADP(+) = L-glutamyl 5-phosphate + NADPH + H(+). It functions in the pathway amino-acid biosynthesis; L-proline biosynthesis; L-glutamate 5-semialdehyde from L-glutamate: step 1/2. Its pathway is amino-acid biosynthesis; L-proline biosynthesis; L-glutamate 5-semialdehyde from L-glutamate: step 2/2. Isoform Short: Inhibited by L-ornithine with a Ki of approximately 0.25 mm. Isoform Long: Insensitive to ornithine inhibition. This is due to the two amino acid insert which abolishes feedback inhibition of P5CS activity by L-ornithine. Bifunctional enzyme that converts glutamate to glutamate 5-semialdehyde, an intermediate in the biosynthesis of proline, ornithine and arginine. In Homo sapiens (Human), this protein is Delta-1-pyrroline-5-carboxylate synthase (ALDH18A1).